A 687-amino-acid polypeptide reads, in one-letter code: Ribonuclease E (687 aa).

An S1 motif domain is found at 35–117 (GDIYLGVVEN…LTGNITLPGR (83 aa)). 2 residues coordinate Mg(2+): D296 and D339. Zn(2+)-binding residues include C397 and C400. The tract at residues 650–687 (PIKLTETMEESEVNAASTANRRRRRRSSASDSDTGEDS) is disordered. The C4 Arg-rich motif, necessary and sufficient to confer PNPase binding on another protein motif lies at 670–678 (RRRRRRSSA).

It belongs to the RNase E/G family. May form homodimers or higher order multimers. Interacts with polynucleotide phosphorylase (PNPase, pnp) via the C4 Arg-rich motif (residues 670-678). A homotetramer formed by a dimer of dimers. It depends on Mg(2+) as a cofactor. The cofactor is Zn(2+).

It localises to the cytoplasm. The enzyme catalyses Endonucleolytic cleavage of single-stranded RNA in A- and U-rich regions.. In terms of biological role, endoribonuclease that plays a central role in rRNA and tRNA processing and mRNA decay. Has been shown to act on 9S rRNA (the precursor of 5S rRNA). The chain is Ribonuclease E from Nostoc sp. (strain PCC 7120 / SAG 25.82 / UTEX 2576).